Reading from the N-terminus, the 191-residue chain is uncharacterized protein (191 aa).

The next 6 helical transmembrane spans lie at 4–24, 26–46, 68–88, 90–110, 135–155, and 168–188; these read IYRQ…VLIF, KQLI…YFLC, GKGA…IDDI, AVFF…IIGI, LILY…SAFI, and LYLP…CSLM.

Its subcellular location is the cell membrane. This is an uncharacterized protein from Methanocaldococcus jannaschii (strain ATCC 43067 / DSM 2661 / JAL-1 / JCM 10045 / NBRC 100440) (Methanococcus jannaschii).